The sequence spans 93 residues: SH3 domain-binding glutamic acid-rich-like protein 3 (93 aa).

Serine 2 is modified (N-acetylserine). The Glutaredoxin domain maps to serine 2–alanine 93. Residue threonine 9 is glycosylated (O-linked (GalNAc...) threonine).

Belongs to the SH3BGR family. In terms of assembly, interacts with MYO1C (via its IQ motifs); the interaction is dependent on calcium and takes place at membrane ruffles. In terms of processing, may be glycosylated. In terms of tissue distribution, expressed in heart, liver, lung, kidney, spleen, thymus, ovarian follicles, skeletal muscle, brain, lymph node and mammary epithelial and stromal cells (at protein level).

The protein resides in the cytoplasm. It localises to the cytosol. The protein localises to the cell projection. It is found in the ruffle membrane. Its subcellular location is the nucleus. Could act as a modulator of glutaredoxin biological activity. May play a role in cytoskeleton organization. This Rattus norvegicus (Rat) protein is SH3 domain-binding glutamic acid-rich-like protein 3.